The sequence spans 883 residues: Phosphoenolpyruvate carboxylase (883 aa).

Active-site residues include His138 and Lys546.

Belongs to the PEPCase type 1 family. Mg(2+) is required as a cofactor.

The enzyme catalyses oxaloacetate + phosphate = phosphoenolpyruvate + hydrogencarbonate. In terms of biological role, forms oxaloacetate, a four-carbon dicarboxylic acid source for the tricarboxylic acid cycle. This Shigella flexneri protein is Phosphoenolpyruvate carboxylase.